Reading from the N-terminus, the 53-residue chain is Ribulose bisphosphate carboxylase large chain (53 aa).

The propeptide occupies 1-2 (MS). P3 carries the post-translational modification N-acetylproline. N6,N6,N6-trimethyllysine is present on K14.

It belongs to the RuBisCO large chain family. Type I subfamily. Heterohexadecamer of 8 large chains and 8 small chains.

Its subcellular location is the plastid. It localises to the chloroplast. It catalyses the reaction 2 (2R)-3-phosphoglycerate + 2 H(+) = D-ribulose 1,5-bisphosphate + CO2 + H2O. The enzyme catalyses D-ribulose 1,5-bisphosphate + O2 = 2-phosphoglycolate + (2R)-3-phosphoglycerate + 2 H(+). In terms of biological role, ruBisCO catalyzes two reactions: the carboxylation of D-ribulose 1,5-bisphosphate, the primary event in carbon dioxide fixation, as well as the oxidative fragmentation of the pentose substrate in the photorespiration process. Both reactions occur simultaneously and in competition at the same active site. The chain is Ribulose bisphosphate carboxylase large chain (rbcL) from Malus domestica (Apple).